A 46-amino-acid chain; its full sequence is Esculentin-1HSa (46 aa).

Cys40 and Cys46 are joined by a disulfide.

In terms of tissue distribution, expressed by the skin glands.

The protein resides in the secreted. In terms of biological role, has antibacterial activity against the Gram-positive bacterium S.aureus ATCC 25923 (MIC=12 uM) and the Gram-negative bacterium E.coli ATCC 25726 (MIC=12 uM). The chain is Esculentin-1HSa from Odorrana hosii (Hose's rock frog).